The following is a 371-amino-acid chain: MLKFTVHKTSGGARRGTLELNHGTVETPVFQPVGTYGSVKAMSPVELNDIGAQIILGNTFHLWLRPGLEIVEQFGGLHEFIGWDKPILTDSGGFQVFSLSDMRKLTEEGCTFQSPINGDKLFLSPEISMKIQTVLNSDIVMQLDECTPGQVDHATAQKSLQMSLRWAERSRRAFDDLKNPNALFGIVQGNLYTDLRQESLEGLMQVGFDGIAIGGLSVGEPKPEMYRMLTELKDMLPADKPHYLMGVGTPEDLVHGVANGVDMFDCVMPTRNARNGWIFTQWGDVKIKNARYKDDKKPLDEECACYACRNFSRAYLHHLHRVGEILGARLNTIHNLFYYQELMREMRKAIEEDRFEDFRLEFAAKRARSVN.

Residue D90 is the Proton acceptor of the active site. Substrate-binding positions include 90-94 (DSGGF), D144, Q188, and G215. Positions 246 to 252 (GVGTPED) are RNA binding. Residue D265 is the Nucleophile of the active site. Residues 270–274 (TRNAR) form an RNA binding; important for wobble base 34 recognition region. Residues C303, C305, C308, and H334 each coordinate Zn(2+).

Belongs to the queuine tRNA-ribosyltransferase family. In terms of assembly, homodimer. Within each dimer, one monomer is responsible for RNA recognition and catalysis, while the other monomer binds to the replacement base PreQ1. It depends on Zn(2+) as a cofactor.

It catalyses the reaction 7-aminomethyl-7-carbaguanine + guanosine(34) in tRNA = 7-aminomethyl-7-carbaguanosine(34) in tRNA + guanine. Its pathway is tRNA modification; tRNA-queuosine biosynthesis. Catalyzes the base-exchange of a guanine (G) residue with the queuine precursor 7-aminomethyl-7-deazaguanine (PreQ1) at position 34 (anticodon wobble position) in tRNAs with GU(N) anticodons (tRNA-Asp, -Asn, -His and -Tyr). Catalysis occurs through a double-displacement mechanism. The nucleophile active site attacks the C1' of nucleotide 34 to detach the guanine base from the RNA, forming a covalent enzyme-RNA intermediate. The proton acceptor active site deprotonates the incoming PreQ1, allowing a nucleophilic attack on the C1' of the ribose to form the product. After dissociation, two additional enzymatic reactions on the tRNA convert PreQ1 to queuine (Q), resulting in the hypermodified nucleoside queuosine (7-(((4,5-cis-dihydroxy-2-cyclopenten-1-yl)amino)methyl)-7-deazaguanosine). This chain is Queuine tRNA-ribosyltransferase, found in Chromobacterium violaceum (strain ATCC 12472 / DSM 30191 / JCM 1249 / CCUG 213 / NBRC 12614 / NCIMB 9131 / NCTC 9757 / MK).